The primary structure comprises 373 residues: S-adenosylmethionine:tRNA ribosyltransferase-isomerase (373 aa).

It belongs to the QueA family. As to quaternary structure, monomer.

The protein resides in the cytoplasm. It carries out the reaction 7-aminomethyl-7-carbaguanosine(34) in tRNA + S-adenosyl-L-methionine = epoxyqueuosine(34) in tRNA + adenine + L-methionine + 2 H(+). The protein operates within tRNA modification; tRNA-queuosine biosynthesis. Functionally, transfers and isomerizes the ribose moiety from AdoMet to the 7-aminomethyl group of 7-deazaguanine (preQ1-tRNA) to give epoxyqueuosine (oQ-tRNA). The sequence is that of S-adenosylmethionine:tRNA ribosyltransferase-isomerase from Caulobacter sp. (strain K31).